Reading from the N-terminus, the 518-residue chain is GRIN2-like protein (518 aa).

Disordered stretches follow at residues 1-23 and 467-500; these read MGLE…QSRT and QTEP…FRTM. The span at 476–494 shows a compositional bias: basic and acidic residues; the sequence is KSDEDPLNKEPSSDKMEKK.

As to quaternary structure, may interact with GNAO1.

Functionally, may be involved in neurite outgrowth. The chain is GRIN2-like protein from Gallus gallus (Chicken).